The sequence spans 209 residues: Endonuclease III (209 aa).

The HhH domain maps to arginine 108 to asparagine 127. [4Fe-4S] cluster-binding residues include cysteine 187, cysteine 194, cysteine 197, and cysteine 203.

This sequence belongs to the Nth/MutY family. [4Fe-4S] cluster is required as a cofactor.

The enzyme catalyses 2'-deoxyribonucleotide-(2'-deoxyribose 5'-phosphate)-2'-deoxyribonucleotide-DNA = a 3'-end 2'-deoxyribonucleotide-(2,3-dehydro-2,3-deoxyribose 5'-phosphate)-DNA + a 5'-end 5'-phospho-2'-deoxyribonucleoside-DNA + H(+). Its function is as follows. DNA repair enzyme that has both DNA N-glycosylase activity and AP-lyase activity. The DNA N-glycosylase activity releases various damaged pyrimidines from DNA by cleaving the N-glycosidic bond, leaving an AP (apurinic/apyrimidinic) site. The AP-lyase activity cleaves the phosphodiester bond 3' to the AP site by a beta-elimination, leaving a 3'-terminal unsaturated sugar and a product with a terminal 5'-phosphate. The sequence is that of Endonuclease III from Buchnera aphidicola subsp. Schizaphis graminum (strain Sg).